Here is a 520-residue protein sequence, read N- to C-terminus: Cholesterol side-chain cleavage enzyme, mitochondrial (520 aa).

A mitochondrion-targeting transit peptide spans 1–39 (MLARGLPLRSALVKACPPILSTVGEGWGHHRVGTGEGAG). Cysteine 461 contacts heme.

Belongs to the cytochrome P450 family. Interacts with FDX1/adrenodoxin. Heme serves as cofactor. Detected in adrenal cortex and corpus luteum (at protein level).

Its subcellular location is the mitochondrion inner membrane. The enzyme catalyses 6 reduced [adrenodoxin] + cholesterol + 3 O2 + 6 H(+) = 4-methylpentanal + pregnenolone + 6 oxidized [adrenodoxin] + 4 H2O. It carries out the reaction 2 reduced [adrenodoxin] + cholesterol + O2 + 2 H(+) = (22R)-hydroxycholesterol + 2 oxidized [adrenodoxin] + H2O. The catalysed reaction is (22R)-hydroxycholesterol + 2 reduced [adrenodoxin] + O2 + 2 H(+) = (20R,22R)-20,22-dihydroxycholesterol + 2 oxidized [adrenodoxin] + H2O. It catalyses the reaction (20R,22R)-20,22-dihydroxycholesterol + 2 reduced [adrenodoxin] + O2 + 2 H(+) = 4-methylpentanal + pregnenolone + 2 oxidized [adrenodoxin] + 2 H2O. Its pathway is lipid metabolism; C21-steroid hormone metabolism. It participates in steroid metabolism; cholesterol metabolism. Its function is as follows. A cytochrome P450 monooxygenase that catalyzes the side-chain hydroxylation and cleavage of cholesterol to pregnenolone, the precursor of most steroid hormones. Catalyzes three sequential oxidation reactions of cholesterol, namely the hydroxylation at C22 followed with the hydroxylation at C20 to yield 20R,22R-hydroxycholesterol that is further cleaved between C20 and C22 to yield the C21-steroid pregnenolone and 4-methylpentanal. Mechanistically, uses molecular oxygen inserting one oxygen atom into a substrate and reducing the second into a water molecule. Two electrons are provided by NADPH via a two-protein mitochondrial transfer system comprising flavoprotein FDXR (adrenodoxin/ferredoxin reductase) and nonheme iron-sulfur protein FDX1 or FDX2 (adrenodoxin/ferredoxin). The polypeptide is Cholesterol side-chain cleavage enzyme, mitochondrial (CYP11A1) (Bos taurus (Bovine)).